Reading from the N-terminus, the 720-residue chain is Phosphoribosylformylglycinamidine synthase subunit PurL (720 aa).

The active site involves His-47. The ATP site is built by Tyr-50 and Lys-89. Glu-91 is a Mg(2+) binding site. Substrate is bound by residues Ser-92–His-95 and Arg-114. The active-site Proton acceptor is the His-93. Asp-115 is a binding site for Mg(2+). Residue Gln-238 participates in substrate binding. Residue Asp-266 coordinates Mg(2+). Glu-310–Gln-312 serves as a coordination point for substrate. The ATP site is built by Asp-488 and Gly-525. Residue Asn-526 coordinates Mg(2+). Ser-528 serves as a coordination point for substrate.

The protein belongs to the FGAMS family. As to quaternary structure, monomer. Part of the FGAM synthase complex composed of 1 PurL, 1 PurQ and 2 PurS subunits.

It is found in the cytoplasm. It carries out the reaction N(2)-formyl-N(1)-(5-phospho-beta-D-ribosyl)glycinamide + L-glutamine + ATP + H2O = 2-formamido-N(1)-(5-O-phospho-beta-D-ribosyl)acetamidine + L-glutamate + ADP + phosphate + H(+). Its pathway is purine metabolism; IMP biosynthesis via de novo pathway; 5-amino-1-(5-phospho-D-ribosyl)imidazole from N(2)-formyl-N(1)-(5-phospho-D-ribosyl)glycinamide: step 1/2. Its function is as follows. Part of the phosphoribosylformylglycinamidine synthase complex involved in the purines biosynthetic pathway. Catalyzes the ATP-dependent conversion of formylglycinamide ribonucleotide (FGAR) and glutamine to yield formylglycinamidine ribonucleotide (FGAM) and glutamate. The FGAM synthase complex is composed of three subunits. PurQ produces an ammonia molecule by converting glutamine to glutamate. PurL transfers the ammonia molecule to FGAR to form FGAM in an ATP-dependent manner. PurS interacts with PurQ and PurL and is thought to assist in the transfer of the ammonia molecule from PurQ to PurL. The polypeptide is Phosphoribosylformylglycinamidine synthase subunit PurL (Cereibacter sphaeroides (strain KD131 / KCTC 12085) (Rhodobacter sphaeroides)).